Here is a 75-residue protein sequence, read N- to C-terminus: Small ribosomal subunit protein eS28 (75 aa).

The protein belongs to the eukaryotic ribosomal protein eS28 family.

This Methanococcus aeolicus (strain ATCC BAA-1280 / DSM 17508 / OCM 812 / Nankai-3) protein is Small ribosomal subunit protein eS28.